The chain runs to 215 residues: 3-isopropylmalate dehydratase small subunit (215 aa).

This sequence belongs to the LeuD family. LeuD type 1 subfamily. As to quaternary structure, heterodimer of LeuC and LeuD.

The enzyme catalyses (2R,3S)-3-isopropylmalate = (2S)-2-isopropylmalate. The protein operates within amino-acid biosynthesis; L-leucine biosynthesis; L-leucine from 3-methyl-2-oxobutanoate: step 2/4. Catalyzes the isomerization between 2-isopropylmalate and 3-isopropylmalate, via the formation of 2-isopropylmaleate. The sequence is that of 3-isopropylmalate dehydratase small subunit from Stutzerimonas stutzeri (strain A1501) (Pseudomonas stutzeri).